A 549-amino-acid chain; its full sequence is Probable protein kinase UbiB (549 aa).

The region spanning 123–501 (DFDETPLASA…QQQAHKSNYL (379 aa)) is the Protein kinase domain. Residues 129 to 137 (LASASISQV) and Lys152 each bind ATP. Residue Asp287 is the Proton acceptor of the active site. 2 helical membrane-spanning segments follow: residues 498–518 (SNYLLITSAILLICGTLLFNQ) and 520–540 (ATLWSPYVCLISGAVLWIIGW).

The protein belongs to the ABC1 family. UbiB subfamily.

It is found in the cell inner membrane. The protein operates within cofactor biosynthesis; ubiquinone biosynthesis [regulation]. Is probably a protein kinase regulator of UbiI activity which is involved in aerobic coenzyme Q (ubiquinone) biosynthesis. This chain is Probable protein kinase UbiB, found in Shewanella sp. (strain ANA-3).